A 283-amino-acid polypeptide reads, in one-letter code: Alpha-ketoglutarate-dependent taurine dioxygenase (283 aa).

Positions 70, 73, and 95 each coordinate taurine. Positions 99 and 101 each coordinate Fe cation. Valine 102 lines the taurine pocket. Residue threonine 126 coordinates 2-oxoglutarate. Tryptophan 128, tryptophan 240, and tryptophan 248 each carry 3-hydroxytryptophan; by autocatalysis. Histidine 255 is a Fe cation binding site. 3 residues coordinate 2-oxoglutarate: histidine 255, arginine 266, and arginine 270. A taurine-binding site is contributed by arginine 270.

Belongs to the TfdA dioxygenase family. In terms of assembly, homodimer. Was later shown to be a homotetramer arranged as a dimer of two dimers. Fe(2+) is required as a cofactor.

It catalyses the reaction taurine + 2-oxoglutarate + O2 = aminoacetaldehyde + sulfite + succinate + CO2 + H(+). It functions in the pathway organosulfur degradation; taurine degradation via aerobic pathway; aminoacetaldehyde and sulfite from taurine: step 1/1. With respect to regulation, activated by ascorbate and inhibited by divalent metal ions such as zinc, copper and cobalt. Catalyzes the alpha-ketoglutarate-dependent hydroxylation of taurine yielding sulfite and aminoacetaldehyde after decomposition of an unstable intermediate. Is required for the utilization of taurine (2-aminoethanesulfonate) as an alternative sulfur source for growth in the absence of sulfate. To a lesser extent, pentanesulfonate, 3-(N-morpholino)propanesulfonate and 1,3-dioxo-2-isoindolineethanesulfonate are also desulfonated by this enzyme in vitro; however, desulfonation by TauD of organosulfonates other than taurine seem to be of little or no importance for sulfur metabolism in vivo. In Escherichia coli (strain K12), this protein is Alpha-ketoglutarate-dependent taurine dioxygenase (tauD).